Here is a 211-residue protein sequence, read N- to C-terminus: Octanoyltransferase (211 aa).

The BPL/LPL catalytic domain maps to 32-211; that stretch reads DHEPEIIYLV…IQTEFNKIFK (180 aa). Substrate is bound by residues 71–78, 145–147, and 158–160; these read RGGKFTFH, AIG, and GVA. Residue C176 is the Acyl-thioester intermediate of the active site.

Belongs to the LipB family.

The protein localises to the cytoplasm. The catalysed reaction is octanoyl-[ACP] + L-lysyl-[protein] = N(6)-octanoyl-L-lysyl-[protein] + holo-[ACP] + H(+). Its pathway is protein modification; protein lipoylation via endogenous pathway; protein N(6)-(lipoyl)lysine from octanoyl-[acyl-carrier-protein]: step 1/2. Functionally, catalyzes the transfer of endogenously produced octanoic acid from octanoyl-acyl-carrier-protein onto the lipoyl domains of lipoate-dependent enzymes. Lipoyl-ACP can also act as a substrate although octanoyl-ACP is likely to be the physiological substrate. The sequence is that of Octanoyltransferase from Rickettsia massiliae (strain Mtu5).